A 337-amino-acid chain; its full sequence is MRVQDVYNVIYTHTEGEPLCIIYSGVPYPAGSTILEKRAFLEENYDWLRKALMREPRGHADMFGVFLTPPSSRDYDAGLIYIDGKEYSHMCGHGTIAVAMAMVANGLVARDPSGLTRIRFETTAGLVVAEVAHEGDRVLWTRFENVPAYVAAQDIAFELPGYGPLKADLVWGGNYFGIIDLRGTSLRIAPENGSELSRMGLIAREEIRKKVKVQHPTEAHINNLNFVTFWHEPTIEGCLYKNVHVFSAGQLDRSPGGTGTSAMMAYFEARGVIGLNQPITSEGLLGSGTFEGCLIGETTLGTVRAVRPTVKGTAGMLGTASWTINREDPVDAGFLVL.

Residue C91 is the Proton acceptor of the active site. Residues G92–H93, D252, and G257–T258 contribute to the substrate site.

This sequence belongs to the proline racemase family.

The catalysed reaction is trans-4-hydroxy-L-proline = cis-4-hydroxy-D-proline. In terms of biological role, catalyzes the epimerization of trans-4-hydroxy-L-proline (t4LHyp) to cis-4-hydroxy-D-proline (c4DHyp). Is involved in a degradation pathway that converts t4LHyp to alpha-ketoglutarate, which allows R.sphaeroides to grow on t4LHyp as a sole carbon source. Displays no proline racemase activity. This is 4-hydroxyproline 2-epimerase from Cereibacter sphaeroides (strain ATCC 17023 / DSM 158 / JCM 6121 / CCUG 31486 / LMG 2827 / NBRC 12203 / NCIMB 8253 / ATH 2.4.1.) (Rhodobacter sphaeroides).